A 167-amino-acid polypeptide reads, in one-letter code: Small ribosomal subunit protein uS5 (167 aa).

The S5 DRBM domain occupies 12 to 75 (LREKLITINR…ERARGGMRTV (64 aa)).

Belongs to the universal ribosomal protein uS5 family. Part of the 30S ribosomal subunit. Contacts proteins S4 and S8.

In terms of biological role, with S4 and S12 plays an important role in translational accuracy. Located at the back of the 30S subunit body where it stabilizes the conformation of the head with respect to the body. The sequence is that of Small ribosomal subunit protein uS5 from Halorhodospira halophila (strain DSM 244 / SL1) (Ectothiorhodospira halophila (strain DSM 244 / SL1)).